The chain runs to 160 residues: uncharacterized protein (160 aa).

Cysteine 26, cysteine 28, cysteine 50, and histidine 61 together coordinate Zn(2+). The GRF-type; atypical zinc finger occupies 26–69; the sequence is CWCGEEIITFTSKTKENPYRRFYRCAIAMKRENEEHLFKWVDEA.

This is an uncharacterized protein from Arabidopsis thaliana (Mouse-ear cress).